The following is a 466-amino-acid chain: MASTLFDKIWAAHVVDRMPDGTAVLYIDRHLVHEVTSPQAFEGLRMAGRKVRRVDATIAVADHNVPTEDRAAGIAEPESALQVATLEQNVAAFGVPYIPVTDARQGIVHVIGPEQGISLPGMTIVCGDSHTSTHGAMGALAFGIGTSEVEHVLATQTLLQKPAKNMLVRVDGTLPPGCSAKDIVLAIIGEIGTAGGTGHVIEYAGEAIRALDMAGRMTVCNMSIEAGARAGLIAPDETTFEYVRGRPYAPKGEALERAIDYWKTLASDEGAQYDRVVTIDASALVPQVTWGTSPETVVPITGHVPDPAAEPDAGRRAQMERMLQYMDLAPGQALKGTKIDAVFIGSCTNSRIEDLRVAAGIVRGKKVAGHVRAMVVPGSGLVKAQAEAEGLAQVFLDAGFEWREAGCSMCLGMNPDKLKPGERCASTSNRNFEGRQGPGGRTHLVSPAMAAASAITGALADPREMA.

Positions 347, 407, and 410 each coordinate [4Fe-4S] cluster.

This sequence belongs to the aconitase/IPM isomerase family. LeuC type 1 subfamily. In terms of assembly, heterodimer of LeuC and LeuD. The cofactor is [4Fe-4S] cluster.

The enzyme catalyses (2R,3S)-3-isopropylmalate = (2S)-2-isopropylmalate. It participates in amino-acid biosynthesis; L-leucine biosynthesis; L-leucine from 3-methyl-2-oxobutanoate: step 2/4. Catalyzes the isomerization between 2-isopropylmalate and 3-isopropylmalate, via the formation of 2-isopropylmaleate. The polypeptide is 3-isopropylmalate dehydratase large subunit (Acidiphilium cryptum (strain JF-5)).